The sequence spans 218 residues: Small ribosomal subunit protein uS3c (218 aa).

The 76-residue stretch at 43–118 folds into the KH type-2 domain; it reads IKNYVQKNMR…KLNIAITRIA (76 aa).

It belongs to the universal ribosomal protein uS3 family. Part of the 30S ribosomal subunit.

The protein resides in the plastid. Its subcellular location is the chloroplast. This chain is Small ribosomal subunit protein uS3c (rps3), found in Buxus microphylla (Littleleaf boxwood).